The primary structure comprises 289 residues: Inorganic pyrophosphatase (289 aa).

Ser2 is subject to N-acetylserine. Position 57 is an N6-acetyllysine (Lys57). Asp116, Asp121, and Asp153 together coordinate Mg(2+). Lys228 bears the N6-acetyllysine mark. Ser250 is subject to Phosphoserine.

Belongs to the PPase family. Homodimer. Mg(2+) serves as cofactor.

It localises to the cytoplasm. It catalyses the reaction diphosphate + H2O = 2 phosphate + H(+). The chain is Inorganic pyrophosphatase (PPA1) from Macaca fascicularis (Crab-eating macaque).